An 85-amino-acid polypeptide reads, in one-letter code: Toxin To6 (85 aa).

The signal sequence occupies residues 1 to 20 (MSIFPIILALLLIGLDEGEA). Positions 21–83 (LDGYPLSKNN…EMYPGRLPCN (63 aa)) constitute an LCN-type CS-alpha/beta domain. 4 disulfides stabilise this stretch: C32–C82, C36–C59, C42–C64, and C46–C66.

As to expression, expressed by the venom gland.

Its subcellular location is the secreted. In terms of biological role, beta toxins bind voltage-independently at site-4 of sodium channels (Nav) and shift the voltage of activation toward more negative potentials thereby affecting sodium channel activation and promoting spontaneous and repetitive firing. This chain is Toxin To6, found in Tityus obscurus (Amazonian scorpion).